A 406-amino-acid polypeptide reads, in one-letter code: Tryptophan 2,3-dioxygenase A (406 aa).

Substrate-binding positions include 71 to 75 (FIVTH) and Arg-143. His-327 provides a ligand contact to heme. Substrate is bound at residue Thr-341.

This sequence belongs to the tryptophan 2,3-dioxygenase family. In terms of assembly, homotetramer. Dimer of dimers. Heme is required as a cofactor.

It carries out the reaction L-tryptophan + O2 = N-formyl-L-kynurenine. It functions in the pathway amino-acid degradation; L-tryptophan degradation via kynurenine pathway; L-kynurenine from L-tryptophan: step 1/2. Functionally, heme-dependent dioxygenase that catalyzes the oxidative cleavage of the L-tryptophan (L-Trp) pyrrole ring and converts L-tryptophan to N-formyl-L-kynurenine. Catalyzes the oxidative cleavage of the indole moiety. This chain is Tryptophan 2,3-dioxygenase A, found in Danio rerio (Zebrafish).